The sequence spans 413 residues: SET and MYND domain-containing protein DDB_G0273591 (413 aa).

The SET domain maps to D6 to L311. An MYND-type zinc finger spans residues C51–C95. The disordered stretch occupies residues D205–N232. The stretch at N216–R243 forms a coiled coil.

Belongs to the class V-like SAM-binding methyltransferase superfamily.

Its function is as follows. Probable methyltransferase. The polypeptide is SET and MYND domain-containing protein DDB_G0273591 (Dictyostelium discoideum (Social amoeba)).